Here is a 191-residue protein sequence, read N- to C-terminus: Small ribosomal subunit protein uS7 (191 aa).

The disordered stretch occupies residues 56–80; that stretch reads NKSGEQGDGDGEGGGKAGGIKKRSL.

This sequence belongs to the universal ribosomal protein uS7 family. In terms of assembly, part of the 30S ribosomal subunit. Contacts proteins S9 and S11.

Functionally, one of the primary rRNA binding proteins, it binds directly to 16S rRNA where it nucleates assembly of the head domain of the 30S subunit. Is located at the subunit interface close to the decoding center, probably blocks exit of the E-site tRNA. The sequence is that of Small ribosomal subunit protein uS7 from Coxiella burnetii (strain CbuG_Q212) (Coxiella burnetii (strain Q212)).